Consider the following 819-residue polypeptide: Leucine--tRNA ligase (819 aa).

Residues 42 to 52 carry the 'HIGH' region motif; that stretch reads PYPSGRLHMGH. The 'KMSKS' region signature appears at 577–581; it reads KMSKS. K580 lines the ATP pocket.

The protein belongs to the class-I aminoacyl-tRNA synthetase family.

The protein resides in the cytoplasm. It catalyses the reaction tRNA(Leu) + L-leucine + ATP = L-leucyl-tRNA(Leu) + AMP + diphosphate. The polypeptide is Leucine--tRNA ligase (Saccharophagus degradans (strain 2-40 / ATCC 43961 / DSM 17024)).